Here is a 77-residue protein sequence, read N- to C-terminus: Acyl carrier protein (77 aa).

Positions 2-77 (SAIDKRVKEI…DAIDYITEHT (76 aa)) constitute a Carrier domain. Ser-37 carries the post-translational modification O-(pantetheine 4'-phosphoryl)serine.

This sequence belongs to the acyl carrier protein (ACP) family. 4'-phosphopantetheine is transferred from CoA to a specific serine of apo-ACP by AcpS. This modification is essential for activity because fatty acids are bound in thioester linkage to the sulfhydryl of the prosthetic group.

The protein resides in the cytoplasm. Its pathway is lipid metabolism; fatty acid biosynthesis. Its function is as follows. Carrier of the growing fatty acid chain in fatty acid biosynthesis. The polypeptide is Acyl carrier protein (Geobacter metallireducens (strain ATCC 53774 / DSM 7210 / GS-15)).